A 400-amino-acid chain; its full sequence is Phosphoglycerate kinase (400 aa).

Substrate contacts are provided by residues 21–23 (DLN), arginine 36, 59–62 (HLGR), arginine 114, and arginine 147. Residues lysine 202, glutamate 329, and 355–358 (GGDT) contribute to the ATP site.

The protein belongs to the phosphoglycerate kinase family. In terms of assembly, monomer.

The protein resides in the cytoplasm. The enzyme catalyses (2R)-3-phosphoglycerate + ATP = (2R)-3-phospho-glyceroyl phosphate + ADP. The protein operates within carbohydrate degradation; glycolysis; pyruvate from D-glyceraldehyde 3-phosphate: step 2/5. The chain is Phosphoglycerate kinase from Psychrobacter cryohalolentis (strain ATCC BAA-1226 / DSM 17306 / VKM B-2378 / K5).